The following is a 340-amino-acid chain: Adenosine deaminase (340 aa).

Zn(2+)-binding residues include His15 and His17. Residues His17, Asp19, and Gly172 each contribute to the substrate site. His199 lines the Zn(2+) pocket. Residue Glu202 is the Proton donor of the active site. Asp279 is a binding site for Zn(2+).

This sequence belongs to the metallo-dependent hydrolases superfamily. Adenosine and AMP deaminases family. Adenosine deaminase subfamily. Requires Zn(2+) as cofactor.

It catalyses the reaction adenosine + H2O + H(+) = inosine + NH4(+). The catalysed reaction is 2'-deoxyadenosine + H2O + H(+) = 2'-deoxyinosine + NH4(+). In terms of biological role, catalyzes the hydrolytic deamination of adenosine and 2-deoxyadenosine. The sequence is that of Adenosine deaminase from Streptococcus agalactiae serotype III (strain NEM316).